Reading from the N-terminus, the 365-residue chain is 2-aminoethylphosphonate--pyruvate transaminase (365 aa).

Lys194 is subject to N6-(pyridoxal phosphate)lysine.

The protein belongs to the class-V pyridoxal-phosphate-dependent aminotransferase family. PhnW subfamily. In terms of assembly, homodimer. Pyridoxal 5'-phosphate is required as a cofactor.

The enzyme catalyses (2-aminoethyl)phosphonate + pyruvate = phosphonoacetaldehyde + L-alanine. Its function is as follows. Involved in phosphonate degradation. The polypeptide is 2-aminoethylphosphonate--pyruvate transaminase (Bacillus thuringiensis (strain Al Hakam)).